The following is a 387-amino-acid chain: Colicin-N (387 aa).

Over residues 1–11 the composition is skewed to polar residues; sequence MGSNGADNAHN. The interval 1-106 is disordered; it reads MGSNGADNAH…ITITPDNSKP (106 aa). Over residues 14 to 30 the composition is skewed to gly residues; sequence FGGGKNPGIGNTSGAGS. A compositionally biased stretch (low complexity) spans 31 to 48; the sequence is NGSASSNRGNSNGWSWSN. Residues 78–87 show a composition bias toward gly residues; the sequence is GNSGNRGNNG. 2 helical membrane-spanning segments follow: residues 325–345 and 350–370; these read IIGG…LSFL and LAVT…SSFI.

Belongs to the channel forming colicin family.

Its subcellular location is the cell membrane. Functionally, this colicin is a channel-forming colicin. This class of transmembrane toxins depolarize the cytoplasmic membrane, leading to dissipation of cellular energy. In terms of biological role, colicins are polypeptide toxins produced by and active against E.coli and closely related bacteria. This is Colicin-N (cna) from Escherichia coli.